The chain runs to 248 residues: Probable transcriptional regulatory protein SO_2432 (248 aa).

This sequence belongs to the TACO1 family.

Its subcellular location is the cytoplasm. In Shewanella oneidensis (strain ATCC 700550 / JCM 31522 / CIP 106686 / LMG 19005 / NCIMB 14063 / MR-1), this protein is Probable transcriptional regulatory protein SO_2432.